We begin with the raw amino-acid sequence, 229 residues long: Peptidyl-prolyl cis-trans isomerase FKBP17-1, chloroplastic (229 aa).

Residues 1–63 (MIRCFAWTPL…SISLSIIAVT (63 aa)) constitute a chloroplast transit peptide. One can recognise a PPIase FKBP-type domain in the interval 105–225 (GDQIEIHYYG…VFDIELVSTR (121 aa)).

It belongs to the FKBP-type PPIase family.

It localises to the plastid. The protein localises to the chloroplast thylakoid lumen. It carries out the reaction [protein]-peptidylproline (omega=180) = [protein]-peptidylproline (omega=0). PPIases accelerate the folding of proteins. It catalyzes the cis-trans isomerization of proline imidic peptide bonds in oligopeptides. This chain is Peptidyl-prolyl cis-trans isomerase FKBP17-1, chloroplastic (FKBP17-1), found in Arabidopsis thaliana (Mouse-ear cress).